Consider the following 244-residue polypeptide: Glucosamine-6-phosphate deaminase (244 aa).

The active-site Proton acceptor; for enolization step is the D67. The For ring-opening step role is filled by N136. H138 functions as the Proton acceptor; for ring-opening step in the catalytic mechanism. Residue E143 is the For ring-opening step of the active site.

The protein belongs to the glucosamine/galactosamine-6-phosphate isomerase family. NagB subfamily.

The enzyme catalyses alpha-D-glucosamine 6-phosphate + H2O = beta-D-fructose 6-phosphate + NH4(+). It participates in amino-sugar metabolism; N-acetylneuraminate degradation; D-fructose 6-phosphate from N-acetylneuraminate: step 5/5. Functionally, catalyzes the reversible isomerization-deamination of glucosamine 6-phosphate (GlcN6P) to form fructose 6-phosphate (Fru6P) and ammonium ion. This Clostridium botulinum (strain ATCC 19397 / Type A) protein is Glucosamine-6-phosphate deaminase.